Consider the following 611-residue polypeptide: MAYFNYNRRKSSVAQIGDTPMGGENPIRIQSMANVSTMDTEAAVAQAIRMIEAGAEYVRFTAQGEREARNLGEIRKQLNEQGYTTPLVADIHFNPRAADAAAGEVEKVRINPGNYVDKVKTFSHLEYTDEEYAAEIEKIRERFVPFLNICKAHGTAIRIGVNHGSLSDRIMSRYGDTPEGMVASCMEFLRICREENFPDVVISIKASNTVVMVRTVRLLVRTMEAENMHYPLHLGVTEAGDGEDGRIKSAVGIGTLLCDGIGDTIRVSLSEDPEAEMPVARKLVDYIRERENHRPIEASMAPGFDTVATSRRISRVVEGIGGTFSPVVISDRSSGDFEFDYLSLPDYIYIGKEDPDNLPDNFRLLVDAHFWKERPNAFPCFIASEAEELKDYDCPLKFIRLTYMDLTDRMLEILKADKTVVVLLSTHHRNGVGSQRAAMHKLLMAGCDVPVVLHRDFRETDVELLQLKSAADFGTLLLDGFGDGLMLHNEGCEAVVSDRCMFGILQATRTRISKTEYISCPSCGRTLYDLQTTIARIKEATSHLKGLKIGIMGCIVNGPGEMADADYGYVGAGRGQISLYKGKECVLKNIPEEDAVERLVQLIKENGDWVN.

[4Fe-4S] cluster contacts are provided by Cys-520, Cys-523, Cys-554, and Glu-561.

This sequence belongs to the IspG family. [4Fe-4S] cluster serves as cofactor.

It carries out the reaction (2E)-4-hydroxy-3-methylbut-2-enyl diphosphate + oxidized [flavodoxin] + H2O + 2 H(+) = 2-C-methyl-D-erythritol 2,4-cyclic diphosphate + reduced [flavodoxin]. It participates in isoprenoid biosynthesis; isopentenyl diphosphate biosynthesis via DXP pathway; isopentenyl diphosphate from 1-deoxy-D-xylulose 5-phosphate: step 5/6. Functionally, converts 2C-methyl-D-erythritol 2,4-cyclodiphosphate (ME-2,4cPP) into 1-hydroxy-2-methyl-2-(E)-butenyl 4-diphosphate. The chain is 4-hydroxy-3-methylbut-2-en-1-yl diphosphate synthase (flavodoxin) from Parabacteroides distasonis (strain ATCC 8503 / DSM 20701 / CIP 104284 / JCM 5825 / NCTC 11152).